A 968-amino-acid chain; its full sequence is RNA polymerase-associated protein RapA (968 aa).

The Helicase ATP-binding domain maps to 164 to 334 (DVGRRHAPRV…FARLRLLDPN (171 aa)). 177 to 184 (DEVGLGKT) contacts ATP. A DEAH box motif is present at residues 280–283 (DEAH). Residues 490 to 685 (RVEWLMGYLT…ALKAQLEQGR (196 aa)) form the Helicase C-terminal domain.

Belongs to the SNF2/RAD54 helicase family. RapA subfamily. As to quaternary structure, interacts with the RNAP. Has a higher affinity for the core RNAP than for the holoenzyme. Its ATPase activity is stimulated by binding to RNAP.

Transcription regulator that activates transcription by stimulating RNA polymerase (RNAP) recycling in case of stress conditions such as supercoiled DNA or high salt concentrations. Probably acts by releasing the RNAP, when it is trapped or immobilized on tightly supercoiled DNA. Does not activate transcription on linear DNA. Probably not involved in DNA repair. This Salmonella typhimurium (strain LT2 / SGSC1412 / ATCC 700720) protein is RNA polymerase-associated protein RapA.